Reading from the N-terminus, the 141-residue chain is Large ribosomal subunit protein uL16 (141 aa).

The protein belongs to the universal ribosomal protein uL16 family. As to quaternary structure, part of the 50S ribosomal subunit.

Its function is as follows. Binds 23S rRNA and is also seen to make contacts with the A and possibly P site tRNAs. The protein is Large ribosomal subunit protein uL16 of Geobacillus thermodenitrificans (strain NG80-2).